Consider the following 1364-residue polypeptide: ABC-type transporter cns4 (1364 aa).

An ABC transporter 1 domain is found at 42-290; sequence SRVKESRAKP…MEEMGFLYTD (249 aa). N152 and N214 each carry an N-linked (GlcNAc...) asparagine glycan. Transmembrane regions (helical) follow at residues 435–455, 483–503, 508–528, 540–560, and 567–587; these read LFFA…GSFA, IPLI…MTGL, EAFL…TALF, AAIK…GFLI, and PWLG…AVLS. A glycan (N-linked (GlcNAc...) asparagine) is linked at N610. A helical transmembrane segment spans residues 650–670; the sequence is FAIVWVWWALFVILTVYFTSN. Residues N689, N711, and N739 are each glycosylated (N-linked (GlcNAc...) asparagine). Residues 697–732 are disordered; the sequence is DEEVGSGPDSHDSRNRSGISPIGDKQETSTDGPSKI. In terms of domain architecture, ABC transporter 2 spans 737-985; sequence IRNTSVFTWK…TVNEYFGRNG (249 aa). 779 to 786 is a binding site for ATP; sequence GSSGAGKT. Helical transmembrane passes span 1076-1094, 1105-1125, 1146-1166, 1185-1205, 1211-1231, and 1245-1265; these read LMLH…WKIG, FTIF…QPLF, AFAT…AVVY, AVFF…QAIA, AIFA…FCGV, and WLYY…FTTF.

This sequence belongs to the ABC transporter superfamily. ABCG family. PDR (TC 3.A.1.205) subfamily.

The protein localises to the cell membrane. ABC-type transporter; part of the gene cluster that mediates the biosynthesis of cordycepin (COR) and pentostatin (PTN), two adenosine analogs with related bioactivity profiles as both mimic adenosine and can inhibit some of the processes that are adenosine dependent. Mediates the pumping of pentostatin but not of cordycepin out of fungal cells. Decreasing intracellular pentostatin releases adenosine deaminase (ADA) inhibition, allowing ADA to deaminate cordycepin into non-toxic 3'-d. The chain is ABC-type transporter cns4 from Cordyceps militaris (strain CM01) (Caterpillar fungus).